The sequence spans 250 residues: Probable transcriptional regulatory protein Ppha_0657 (250 aa).

It belongs to the TACO1 family.

The protein localises to the cytoplasm. This is Probable transcriptional regulatory protein Ppha_0657 from Pelodictyon phaeoclathratiforme (strain DSM 5477 / BU-1).